The following is a 1053-amino-acid chain: Mgp-operon protein 3 (1053 aa).

Residues 1 to 25 (MKTMRKQIYKKAYWLLLPFLPLALA) form the signal peptide. 2 disordered regions span residues 162 to 207 (SLAK…GFKL) and 224 to 261 (EPID…GGSS). Residues 164-175 (AKEKGKTQREVH) show a composition bias toward basic and acidic residues. The segment covering 179–207 (GQANQWTSQRNQHDLNNNPSPNASTGFKL) has biased composition (polar residues). A helical transmembrane segment spans residues 946–966 (VGSSVGILFILLVLGLGIGIP). The disordered stretch occupies residues 1024–1053 (AAFLKPPVQPPSKPEGEQKAVEVKSEETKS). Over residues 1037-1053 (PEGEQKAVEVKSEETKS) the composition is skewed to basic and acidic residues.

It localises to the cell membrane. This chain is Mgp-operon protein 3, found in Mycoplasma genitalium (strain ATCC 33530 / DSM 19775 / NCTC 10195 / G37) (Mycoplasmoides genitalium).